Consider the following 1238-residue polypeptide: MANISSPFGQNEWLVEEMYRKFRDDPSSVDPSWHEFLVDYNPESTAEPVLTDPTSTDKQPSATPQAKPAAAADPVASRAKPATTPTVANGTAAGSAAAPAKTTTTPPIEGDELQVLRGAAAVVVKNMSASLDVPTATSVRAVPAKLMIDNRTVINNQLKRNRGGKISFTHLLGYALVQAVKKFPNINRHYAEIDGKPIAVTPAHTNLGLAIDLQGKDGKRSLVVAGIKRCEELRFAQFVTAYEDIVRRARDGKLTAEDFAGVTISLTNPGTIGTVHSVPRLMTGQGAIIGVGAMEYPAEFQGASAERIAELGIGKLITLTSTYDHRIIQGAESGDFLRTIHEMVLSDSFWDEIFRELSIPYLPVRWRTDNPDSIVDKNARVMELIAAYRNRGHLMADIDPLRLDNTRFRSHPDLDLLTHGLTLWDLDRVFKVNGFGGWKYKKLRDVLGLLRDAYCRHIGVEYTHILDPEQQEWLQQRVETKNVKPTVAEQKYILSKLNAAEAFETFLHTKYVGQKRFSLEGAESVIPMMDAAIDQCAKHGLDEVVIGMPHRGRLNVLANIVGKPYSQIFTEFEGNLNPTLAHSSGDVKYHLGATGLYLQMFGDNDIQVSLTANPSHLEAVDPVLEGLVRAKQDLLNKDTNGNQDEAFSVVPMMLHGDAAFAGQGVVAETLNLANLPGYRVGGTIHIIVNNQIGFTTAPEYSRSSEYCTDVAKMIGAPIFHVNGDDPEACVWVAKLAVDFRQRFKKDVVIDMLCYRRRGHNEGDDPSMTNPYMYDVVDTKRGARKSYTEALIGRGDISLKEAEDALRDYQGQLERVFNEVRDLEKHGVQPSESVESDQMIPAGLSTAVDKALLARIGDAFLAVPEGFTVHPRVQPVLEKRREMAYEGKIDWAFAELLALGSLVAEGKLVRLSGQDTKRGTFSQRHSVIIDRHTGEEFTPLQLLANNPDGSPTGGKFLVYNSPLSEYAAVGFEYGYTVGNPDAVVLWEAQFGDFVNGAQSIIDEFINSGEAKWGQLSTVVLLLPHGHEGQGPDHTSGRIERFLQLWAEGSMTFAVPSTPSNYFHLLRRHALDGIKRPLIVFTPKSMLRNKAAVSDIKDFTEIKFRSVLEEPTYEDSIDDRSKVTRVLLTCGKLYYELAARKIKDNRDDVAIVRIEQLAPLPRRRLGETLDRYENAKEFFWVQEEPANQGAWPRFGLELPELLPRLTGIKRISRRAMSAPSSGSSKVHAVEQQEILDTAFG.

Residues 1 to 41 are 2-oxoglutarate dehydrogenase E1, N-terminal part; sequence MANISSPFGQNEWLVEEMYRKFRDDPSSVDPSWHEFLVDYN. The segment at 42-97 is linker; sequence PESTAEPVLTDPTSTDKQPSATPQAKPAAAADPVASRAKPATTPTVANGTAAGSAA. The segment at 44 to 108 is disordered; it reads STAEPVLTDP…PAKTTTTPPI (65 aa). Residues 59–107 show a composition bias toward low complexity; sequence QPSATPQAKPAAAADPVASRAKPATTPTVANGTAAGSAAAPAKTTTTPP. Positions 98-346 are succinyltransferase E2; it reads APAKTTTTPP…LRTIHEMVLS (249 aa). H325 serves as the catalytic Proton acceptor; for succinyltransferase activity. The segment at 347–1238 is 2-oxoglutarate dehydrogenase E1, C-terminal part; that stretch reads DSFWDEIFRE…QQEILDTAFG (892 aa). R551 is a binding site for thiamine diphosphate. 2-oxoglutarate-binding residues include H590 and S615. Residues S615, L617, D657, A658, A659, and N690 each contribute to the thiamine diphosphate site. D657 contacts Mg(2+). Positions 690 and 692 each coordinate Mg(2+). Positions 795 to 825 form a coiled coil; the sequence is DISLKEAEDALRDYQGQLERVFNEVRDLEKH. H1032 is a binding site for 2-oxoglutarate. Residues T1050, R1066, K1101, S1104, Q1154, R1161, and R1162 each coordinate acetyl-CoA.

Belongs to the 2-oxoacid dehydrogenase family. Kgd subfamily. As to quaternary structure, homodimer. The 2-oxoglutarate dehydrogenase (ODH) complex contains multiple copies of three enzymatic components: 2-oxoglutarate dehydrogenase (E1), dihydrolipoamide succinyltransferase (E2) and lipoamide dehydrogenase (E3). Mg(2+) is required as a cofactor. Requires thiamine diphosphate as cofactor.

The enzyme catalyses glyoxylate + 2-oxoglutarate + H(+) = 2-hydroxy-3-oxoadipate + CO2. The catalysed reaction is 2-oxoglutarate + H(+) = succinate semialdehyde + CO2. It catalyses the reaction N(6)-[(R)-lipoyl]-L-lysyl-[protein] + 2-oxoglutarate + H(+) = N(6)-[(R)-S(8)-succinyldihydrolipoyl]-L-lysyl-[protein] + CO2. It carries out the reaction N(6)-[(R)-dihydrolipoyl]-L-lysyl-[protein] + succinyl-CoA = N(6)-[(R)-S(8)-succinyldihydrolipoyl]-L-lysyl-[protein] + CoA. Its pathway is carbohydrate metabolism; tricarboxylic acid cycle; succinate from 2-oxoglutarate (transferase route): step 1/2. The protein operates within carbohydrate metabolism; tricarboxylic acid cycle; succinyl-CoA from 2-oxoglutarate (dehydrogenase route): step 1/1. Its activity is regulated as follows. Alpha-ketoglutarate dehydrogenase and decarboxylase activities are inhibited by unphosphorylated GarA, and allosterically activated by acetyl-CoA, the main substrate of the TCA cycle. In terms of biological role, shows three enzymatic activities that share a first common step, the attack of thiamine-PP on 2-oxoglutarate (alpha-ketoglutarate, KG), leading to the formation of an enamine-thiamine-PP intermediate upon decarboxylation. Thus, displays KGD activity, catalyzing the decarboxylation from five-carbon 2-oxoglutarate to four-carbon succinate semialdehyde (SSA). Also catalyzes C-C bond formation between the activated aldehyde formed after decarboxylation of alpha-ketoglutarate and the carbonyl of glyoxylate (GLX), to yield 2-hydroxy-3-oxoadipate (HOA), which spontaneously decarboxylates to form 5-hydroxylevulinate (HLA). And is also a component of the 2-oxoglutarate dehydrogenase (ODH) complex, that catalyzes the overall conversion of 2-oxoglutarate to succinyl-CoA and CO(2). The KG decarboxylase and KG dehydrogenase reactions provide two alternative, tightly regulated, pathways connecting the oxidative and reductive branches of the TCA cycle. The chain is Multifunctional 2-oxoglutarate metabolism enzyme (kgd) from Mycobacterium leprae (strain TN).